The sequence spans 96 residues: Exodeoxyribonuclease 7 small subunit (96 aa).

Basic and acidic residues predominate over residues 61-79 (ALTKDESQKTNKTGFRTES). The tract at residues 61–96 (ALTKDESQKTNKTGFRTESKSTSQTSSDSVLEEDLF) is disordered. Residues 80–89 (KSTSQTSSDS) are compositionally biased toward low complexity.

It belongs to the XseB family. Heterooligomer composed of large and small subunits.

The protein resides in the cytoplasm. The enzyme catalyses Exonucleolytic cleavage in either 5'- to 3'- or 3'- to 5'-direction to yield nucleoside 5'-phosphates.. Bidirectionally degrades single-stranded DNA into large acid-insoluble oligonucleotides, which are then degraded further into small acid-soluble oligonucleotides. In Leptospira borgpetersenii serovar Hardjo-bovis (strain JB197), this protein is Exodeoxyribonuclease 7 small subunit.